We begin with the raw amino-acid sequence, 327 residues long: Malate dehydrogenase (327 aa).

12–18 (GAAGQIC) contacts NAD(+). The substrate site is built by Arg92 and Arg98. NAD(+)-binding positions include Asn105, Gln112, and 129–131 (TGN). Residues Asn131 and Arg162 each contribute to the substrate site. The active-site Proton acceptor is the His187.

This sequence belongs to the LDH/MDH superfamily. MDH type 2 family.

It catalyses the reaction (S)-malate + NAD(+) = oxaloacetate + NADH + H(+). Its function is as follows. Catalyzes the reversible oxidation of malate to oxaloacetate. The chain is Malate dehydrogenase from Cutibacterium acnes (strain DSM 16379 / KPA171202) (Propionibacterium acnes).